The following is a 713-amino-acid chain: Undecaprenyl-diphosphooligosaccharide--protein glycotransferase (713 aa).

Over 1 to 11 (MLKKEYLKNPY) the chain is Cytoplasmic. A helical membrane pass occupies residues 12–35 (LVLFAMIILAYVFSVLCRFYWIWW). Residues 36 to 96 (ASEFNEYFFN…YWLYKITPFS (61 aa)) are Periplasmic-facing. A DXD motif 1 motif is present at residues 52 to 54 (SND). Asp54 serves as a coordination point for Mn(2+). Residues 97 to 122 (FESIILYMSTFLSSLVVIPIILLANE) traverse the membrane as a helical segment. The Cytoplasmic segment spans residues 123–125 (YKR). Residues 126–144 (PLMGFVAALLASVANSYYN) form a helical membrane-spanning segment. Residues 145–152 (RTMSGYYD) are Periplasmic-facing. Residue Asp152 participates in Mn(2+) binding. The DXD motif 2 signature appears at 152 to 154 (DTD). A helical membrane pass occupies residues 153–174 (TDMLVIVLPMFILFFMVRMILK). At 175 to 176 (KD) the chain is on the cytoplasmic side. A helical transmembrane segment spans residues 177 to 192 (FFSLIALPLFIGIYLW). Residues 193 to 197 (WYPSS) lie on the Periplasmic side of the membrane. A [alpha-D-GalNAc-(1-&gt;4)]2-[beta-D-Glc-(1-&gt;3)]-[alpha-D-GalNAc-(1-&gt;4)]2-alpha-D-GalNAc-(1-&gt;3)-alpha-D-diNAcBac-tri-trans,hepta-cis-undecaprenyl diphosphate-binding site is contributed by 194–196 (YPS). A helical membrane pass occupies residues 198–215 (YTLNVALIGLFLIYTLIF). Over 216–220 (HRKEK) the chain is Cytoplasmic. The chain crosses the membrane as a helical span at residues 221–233 (IFYIAVILSSLTL). Residues 234–237 (SNIA) lie on the Periplasmic side of the membrane. Residues 238 to 254 (WFYQSAIIVILFALFAL) traverse the membrane as a helical segment. Residues 255 to 260 (EQKRLN) are Cytoplasmic-facing. A helical transmembrane segment spans residues 261-278 (FMIIGILGSATLIFLILS). Over 279 to 324 (GGVDPILYQLKFYIFRNDESANLTQGFMYFNVNQTIQEVENVDFSE) the chain is Periplasmic. Tyr291 is a binding site for [alpha-D-GalNAc-(1-&gt;4)]2-[beta-D-Glc-(1-&gt;3)]-[alpha-D-GalNAc-(1-&gt;4)]2-alpha-D-GalNAc-(1-&gt;3)-alpha-D-diNAcBac-tri-trans,hepta-cis-undecaprenyl diphosphate. Positions 313–316 (TIQE) match the TIXE motif motif. Glu316 lines the Mn(2+) pocket. The chain crosses the membrane as a helical span at residues 325–347 (FMRRISGSEIVFLFSLFGFVWLL). At 348-352 (RKHKS) the chain is on the cytoplasmic side. Residues 353-369 (MIMALPILVLGFLALKG) form a helical membrane-spanning segment. The Periplasmic portion of the chain corresponds to 370–373 (GLRF). Arg372 provides a ligand contact to [alpha-D-GalNAc-(1-&gt;4)]2-[beta-D-Glc-(1-&gt;3)]-[alpha-D-GalNAc-(1-&gt;4)]2-alpha-D-GalNAc-(1-&gt;3)-alpha-D-diNAcBac-tri-trans,hepta-cis-undecaprenyl diphosphate. The chain crosses the membrane as a helical span at residues 374 to 396 (TIYSVPVMALGFGFLLSEFKAIL). Topologically, residues 397-406 (VKKYSQLTSN) are cytoplasmic. A helical membrane pass occupies residues 407 to 427 (VCIVFATILTLAPVFIHIYNY). At 428–713 (KAPTVFSQNE…RDAKVFKLKI (286 aa)) the chain is on the periplasmic side. Residues 457–459 (WWD) are interacts with target acceptor peptide in protein substrate. The WWDYG motif signature appears at 457 to 461 (WWDYG). Tyr462 lines the [alpha-D-GalNAc-(1-&gt;4)]2-[beta-D-Glc-(1-&gt;3)]-[alpha-D-GalNAc-(1-&gt;4)]2-alpha-D-GalNAc-(1-&gt;3)-alpha-D-diNAcBac-tri-trans,hepta-cis-undecaprenyl diphosphate pocket. Asn534 is a glycosylation site (N-linked (DATDGlc) asparagine). The short motif at 568–575 (MSLIFSTV) is the MI motif element.

The protein belongs to the STT3 family. The cofactor is Mg(2+). Mn(2+) is required as a cofactor.

The protein resides in the cell inner membrane. The enzyme catalyses tritrans,heptacis-undecaprenyl diphosphooligosaccharide + [protein]-L-asparagine = tritrans,heptacis-undecaprenyl diphosphate + a glycoprotein with the oligosaccharide chain attached by N-beta-D-glycosyl linkage to protein L-asparagine.. It participates in protein modification; protein glycosylation. Oligosaccharyltransferase that catalyzes the transfer of a preassembled heptasaccharide from a lipid donor to an asparagine residue in nascent polypeptide chains, affording a beta-linked glycan to the asparagine side chain of target proteins. Functionally, oligosaccharyl transferase (OST) that catalyzes the initial transfer of a defined glycan (GalNAc(2)GlcGalNAc(3)Bac(NAc)(2) in eubacteria, where Bac(NAc)(2) is di-N-acetyl bacillosamine) from the lipid carrier undecaprenol-pyrophosphate to an asparagine residue within an Asp/Glu-Asn-X-Ser/Thr consensus motif in nascent polypeptide chains, the first step in protein N-glycosylation. The polypeptide is Undecaprenyl-diphosphooligosaccharide--protein glycotransferase (pglB) (Campylobacter jejuni (strain RM1221)).